Consider the following 141-residue polypeptide: Nucleoside diphosphate kinase (141 aa).

Positions 11, 59, 87, 93, 104, and 114 each coordinate ATP. The active-site Pros-phosphohistidine intermediate is H117.

It belongs to the NDK family. In terms of assembly, homotetramer. It depends on Mg(2+) as a cofactor.

The protein resides in the cytoplasm. It carries out the reaction a 2'-deoxyribonucleoside 5'-diphosphate + ATP = a 2'-deoxyribonucleoside 5'-triphosphate + ADP. The enzyme catalyses a ribonucleoside 5'-diphosphate + ATP = a ribonucleoside 5'-triphosphate + ADP. Major role in the synthesis of nucleoside triphosphates other than ATP. The ATP gamma phosphate is transferred to the NDP beta phosphate via a ping-pong mechanism, using a phosphorylated active-site intermediate. The polypeptide is Nucleoside diphosphate kinase (Yersinia enterocolitica serotype O:8 / biotype 1B (strain NCTC 13174 / 8081)).